The chain runs to 152 residues: Ribosome maturation factor RimP (152 aa).

Belongs to the RimP family.

The protein localises to the cytoplasm. Functionally, required for maturation of 30S ribosomal subunits. This chain is Ribosome maturation factor RimP, found in Sodalis glossinidius (strain morsitans).